A 115-amino-acid polypeptide reads, in one-letter code: UPF0235 protein CTA_0423 (115 aa).

This sequence belongs to the UPF0235 family.

This Chlamydia trachomatis serovar A (strain ATCC VR-571B / DSM 19440 / HAR-13) protein is UPF0235 protein CTA_0423.